A 151-amino-acid chain; its full sequence is MAKVQFTKRQETSQFFVHCSATKANMDVGVREIRQWHKEQGWLDVGYHFIIRRDGTVEAGRDQDAVGSHVKGYNSTSVGVCLVGGIDAKGNPEANFTPQQMSALNGVLHELRGTYPKAVIMAHHDVAPKACPSFDLQRWVKTGELVTSDRG.

The Zn(2+) site is built by His-18, His-123, and Cys-131.

The protein belongs to the N-acetylmuramoyl-L-alanine amidase 2 family. In terms of assembly, interacts with the viral RNA polymerase. Zn(2+) serves as cofactor.

It is found in the host cytoplasm. It catalyses the reaction Hydrolyzes the link between N-acetylmuramoyl residues and L-amino acid residues in certain cell-wall glycopeptides.. Its activity is regulated as follows. Binding to the viral RNA polymerase inhibits amidase activity. Functionally, endolysin with amidase activity that degrades host peptidoglycans and participates with the holin and spanin proteins in the sequential events which lead to the programmed host cell lysis releasing the mature viral particles. Once the holin has permeabilized the host cell membrane, the endolysin can reach the periplasm and breaking down the peptidoglycan layer. Its function is as follows. Plays an important role in the switch between viral transcription and genome replication. Once produced in sufficient amount, interacts with and inhibits the viral RNA polymerase that becomes unable to produce additional late transcripts. This lysozyme-polymerase complex in turn plays an active role in viral genome replication and packaging. The sequence is that of Endolysin from Enterobacteria phage K11 (Bacteriophage K11).